The following is a 206-amino-acid chain: Ribosomal RNA large subunit methyltransferase E (206 aa).

S-adenosyl-L-methionine is bound by residues Gly-63, Trp-65, Asp-83, Asp-99, and Asp-124. Residue Lys-164 is the Proton acceptor of the active site.

This sequence belongs to the class I-like SAM-binding methyltransferase superfamily. RNA methyltransferase RlmE family.

Its subcellular location is the cytoplasm. It catalyses the reaction uridine(2552) in 23S rRNA + S-adenosyl-L-methionine = 2'-O-methyluridine(2552) in 23S rRNA + S-adenosyl-L-homocysteine + H(+). Functionally, specifically methylates the uridine in position 2552 of 23S rRNA at the 2'-O position of the ribose in the fully assembled 50S ribosomal subunit. In Buchnera aphidicola subsp. Schizaphis graminum (strain Sg), this protein is Ribosomal RNA large subunit methyltransferase E.